A 312-amino-acid polypeptide reads, in one-letter code: MDWDIIQNLSSNLVFGILLFAMTIYWISLSFFKWTKNLSQVGKISAIVANILLFFILGSRWIVAGYFPLSNLYESLLFLTWTLLTIYLYVEFKTKSKLVGAILIPVALLINGFANLTLSVDMQKSSPLVPALQSNWLMLHVSMMMLSYGTLIMGSLLCILFLVISKYQDIDLQILDESSLPLYNIMLDYYEAKLFSPSDEVSELGKLKLLQSLDNWSYRIIGLGFPFLTIGIIAGGVWANEAWGSYWSWDPKETWALITWIVFATYLHSRITKGWEGKKTAILGGLGFFVIWICYLGVNFLGKGLHSYGWLS.

8 consecutive transmembrane segments (helical) span residues 12-32 (NLVFGILLFAMTIYWISLSFF), 47-67 (IVANILLFFILGSRWIVAGYF), 72-92 (LYESLLFLTWTLLTIYLYVEF), 98-118 (LVGAILIPVALLINGFANLTL), 144-164 (MMLSYGTLIMGSLLCILFLVI), 220-240 (IIGLGFPFLTIGIIAGGVWAN), 254-271 (TWALITWIVFATYLHSRI), and 281-301 (AILGGLGFFVIWICYLGVNFL).

Belongs to the CcmF/CycK/Ccl1/NrfE/CcsA family. In terms of assembly, may interact with Ccs1.

It is found in the plastid. The protein localises to the chloroplast thylakoid membrane. Functionally, required during biogenesis of c-type cytochromes (cytochrome c6 and cytochrome f) at the step of heme attachment. The polypeptide is Cytochrome c biogenesis protein CcsA (Trieres chinensis (Marine centric diatom)).